The chain runs to 124 residues: Small ribosomal subunit protein uS12 (124 aa).

A disordered region spans residues 105 to 124; sequence SGVNDRRQGRSKYGAKRPKS. The segment covering 113-124 has biased composition (basic residues); sequence GRSKYGAKRPKS.

It belongs to the universal ribosomal protein uS12 family. Part of the 30S ribosomal subunit. Contacts proteins S8 and S17. May interact with IF1 in the 30S initiation complex.

Its function is as follows. With S4 and S5 plays an important role in translational accuracy. In terms of biological role, interacts with and stabilizes bases of the 16S rRNA that are involved in tRNA selection in the A site and with the mRNA backbone. Located at the interface of the 30S and 50S subunits, it traverses the body of the 30S subunit contacting proteins on the other side and probably holding the rRNA structure together. The combined cluster of proteins S8, S12 and S17 appears to hold together the shoulder and platform of the 30S subunit. The sequence is that of Small ribosomal subunit protein uS12 from Idiomarina loihiensis (strain ATCC BAA-735 / DSM 15497 / L2-TR).